We begin with the raw amino-acid sequence, 907 residues long: Protein translocase subunit SecA (907 aa).

ATP contacts are provided by residues glutamine 87, 105–109, and aspartate 510; that span reads GEGKT. Zn(2+)-binding residues include cysteine 892, cysteine 894, cysteine 903, and histidine 904.

It belongs to the SecA family. Monomer and homodimer. Part of the essential Sec protein translocation apparatus which comprises SecA, SecYEG and auxiliary proteins SecDF-YajC and YidC. The cofactor is Zn(2+).

Its subcellular location is the cell inner membrane. It localises to the cytoplasm. The catalysed reaction is ATP + H2O + cellular proteinSide 1 = ADP + phosphate + cellular proteinSide 2.. Functionally, part of the Sec protein translocase complex. Interacts with the SecYEG preprotein conducting channel. Has a central role in coupling the hydrolysis of ATP to the transfer of proteins into and across the cell membrane, serving both as a receptor for the preprotein-SecB complex and as an ATP-driven molecular motor driving the stepwise translocation of polypeptide chains across the membrane. This Acinetobacter baumannii (strain ATCC 17978 / DSM 105126 / CIP 53.77 / LMG 1025 / NCDC KC755 / 5377) protein is Protein translocase subunit SecA.